We begin with the raw amino-acid sequence, 391 residues long: F-box protein At2g34280 (391 aa).

Residues Met1–Arg43 form the F-box domain.

The chain is F-box protein At2g34280 from Arabidopsis thaliana (Mouse-ear cress).